Reading from the N-terminus, the 397-residue chain is Elongation factor Tu-2 (397 aa).

Residues 10–206 (KPHVNIGTIG…AVDEFVPEPV (197 aa)) enclose the tr-type G domain. The segment at 19-26 (GHIDHGKT) is G1. 19-26 (GHIDHGKT) lines the GTP pocket. Thr-26 contacts Mg(2+). The tract at residues 62–66 (GITIS) is G2. Residues 83–86 (DCPG) are G3. Residues 83–87 (DCPGH) and 138–141 (NKTD) each bind GTP. The interval 138-141 (NKTD) is G4. Residues 176 to 178 (SAL) are G5.

This sequence belongs to the TRAFAC class translation factor GTPase superfamily. Classic translation factor GTPase family. EF-Tu/EF-1A subfamily. Monomer.

It localises to the cytoplasm. The catalysed reaction is GTP + H2O = GDP + phosphate + H(+). Functionally, GTP hydrolase that promotes the GTP-dependent binding of aminoacyl-tRNA to the A-site of ribosomes during protein biosynthesis. The sequence is that of Elongation factor Tu-2 from Streptomyces ramocissimus.